Consider the following 177-residue polypeptide: Bifunctional protein PyrR (177 aa).

Positions 99 to 111 (VVLVDDVLYTGRT) match the PRPP-binding motif.

The protein belongs to the purine/pyrimidine phosphoribosyltransferase family. PyrR subfamily. Homodimer and homohexamer; in equilibrium.

It carries out the reaction UMP + diphosphate = 5-phospho-alpha-D-ribose 1-diphosphate + uracil. Regulates transcriptional attenuation of the pyrimidine nucleotide (pyr) operon by binding in a uridine-dependent manner to specific sites on pyr mRNA. This disrupts an antiterminator hairpin in the RNA and favors formation of a downstream transcription terminator, leading to a reduced expression of downstream genes. Its function is as follows. Also displays a weak uracil phosphoribosyltransferase activity which is not physiologically significant. This is Bifunctional protein PyrR from Clostridioides difficile (strain 630) (Peptoclostridium difficile).